Consider the following 297-residue polypeptide: Calponin-1 (297 aa).

One can recognise a Calponin-homology (CH) domain in the interval 28–131; that stretch reads HQREQELREW…STLLALASMA (104 aa). Calponin-like repeat units lie at residues 164–189, 204–229, and 243–268; these read IGLQ…RHLY, ISLQ…RQIF, and VSLQ…RQVY. Thr170 carries the post-translational modification Phosphothreonine; by ROCK2. Ser175 carries the phosphoserine; by ROCK2 modification. Phosphothreonine; by ROCK2 occurs at positions 180 and 184. A Phosphothreonine; by ROCK2 modification is found at Thr259.

This sequence belongs to the calponin family. In terms of assembly, part of cGMP kinase signaling complex at least composed of ACTA2/alpha-actin, CNN1/calponin H1, PLN/phospholamban, PRKG1 and ITPR1. In terms of tissue distribution, smooth muscle, and tissues containing significant amounts of smooth muscle.

Thin filament-associated protein that is implicated in the regulation and modulation of smooth muscle contraction. It is capable of binding to actin, calmodulin and tropomyosin. The interaction of calponin with actin inhibits the actomyosin Mg-ATPase activity. The protein is Calponin-1 (CNN1) of Homo sapiens (Human).